Consider the following 388-residue polypeptide: MLLLFLLFEGLCCPGENTAAPQALQSYHLAAEEQLSFRMLQTSSFANHSWAHSEGSGWLGDLQTHGWDTVLGTIRFLKPWSHGNFSKQELKNLQSLFQLYFHSFIQIVQASAGQFQLEYPFEIQILAGCRMNAPQIFLNMAYQGSDFLSFQGISWEPSPGAGIRAQNICKVLNRYLDIKEILQSLLGHTCPRFLAGLMEAGESELKRKVKPEAWLSCGPSPGPGRLQLVCHVSGFYPKPVWVMWMRGEQEQRGTQRGDVLPNADETWYLRATLDVAAGEAAGLSCRVKHSSLGGHDLIIHWGGYSIFLILICLTVIVTLVILVVVDSRLKKQSSNKNILSPHTPSPVFLMGANTQDTKNSRHQFCLAQVSWIKNRVLKKWKTRLNQLW.

An N-terminal signal peptide occupies residues 1 to 19 (MLLLFLLFEGLCCPGENTA). Residues 20-31 (APQALQSYHLAA) constitute a propeptide, removed in sCD1e. N-linked (GlcNAc...) asparagine glycans are attached at residues N47 and N84. Residues 191-301 (PRFLAGLMEA…LGGHDLIIHW (111 aa)) enclose the Ig-like domain. A disulfide bridge connects residues C230 and C285. A helical transmembrane segment spans residues 305–325 (SIFLILICLTVIVTLVILVVV).

Heterodimer with B2M (beta-2-microglobulin). The association with B2M appears to be facilitated by the presence of the propeptide. In terms of processing, mono-ubiquitinated. Post-translationally, proteolytically cleaved in late endosomes to yield a soluble form. Expressed on cortical thymocytes, dendritic cells, Langerhans cells, on certain T-cell leukemias, and in various other tissues.

It is found in the golgi apparatus membrane. It localises to the early endosome. The protein resides in the late endosome. Its subcellular location is the lysosome lumen. Functionally, T-cell surface glycoprotein CD1e, soluble binds diacetylated lipids, including phosphatidyl inositides and diacylated sulfoglycolipids, and is required for the presentation of glycolipid antigens on the cell surface. The membrane-associated form is not active. This is T-cell surface glycoprotein CD1e, membrane-associated (CD1E) from Homo sapiens (Human).